The following is a 361-amino-acid chain: Chorismate synthase (361 aa).

NADP(+)-binding residues include R48 and R54. FMN is bound by residues 125–127 (RSS), 238–239 (NA), G278, 293–297 (KPTSS), and R319.

It belongs to the chorismate synthase family. Homotetramer. Requires FMNH2 as cofactor.

It carries out the reaction 5-O-(1-carboxyvinyl)-3-phosphoshikimate = chorismate + phosphate. Its pathway is metabolic intermediate biosynthesis; chorismate biosynthesis; chorismate from D-erythrose 4-phosphate and phosphoenolpyruvate: step 7/7. Its function is as follows. Catalyzes the anti-1,4-elimination of the C-3 phosphate and the C-6 proR hydrogen from 5-enolpyruvylshikimate-3-phosphate (EPSP) to yield chorismate, which is the branch point compound that serves as the starting substrate for the three terminal pathways of aromatic amino acid biosynthesis. This reaction introduces a second double bond into the aromatic ring system. This is Chorismate synthase from Salmonella arizonae (strain ATCC BAA-731 / CDC346-86 / RSK2980).